The sequence spans 87 residues: UPF0250 protein BCc_307 (87 aa).

Belongs to the UPF0250 family.

This chain is UPF0250 protein BCc_307, found in Buchnera aphidicola subsp. Cinara cedri (strain Cc).